Here is a 268-residue protein sequence, read N- to C-terminus: Tryptophan synthase alpha chain (268 aa).

Active-site proton acceptor residues include Glu49 and Asp60.

This sequence belongs to the TrpA family. In terms of assembly, tetramer of two alpha and two beta chains.

The catalysed reaction is (1S,2R)-1-C-(indol-3-yl)glycerol 3-phosphate + L-serine = D-glyceraldehyde 3-phosphate + L-tryptophan + H2O. Its pathway is amino-acid biosynthesis; L-tryptophan biosynthesis; L-tryptophan from chorismate: step 5/5. In terms of biological role, the alpha subunit is responsible for the aldol cleavage of indoleglycerol phosphate to indole and glyceraldehyde 3-phosphate. The protein is Tryptophan synthase alpha chain of Pseudomonas aeruginosa (strain UCBPP-PA14).